Here is a 192-residue protein sequence, read N- to C-terminus: uncharacterized protein (192 aa).

The Nudix hydrolase domain maps to 29 to 160 (RRQAAVLIPV…PLDIYRRGDS (132 aa)). A Nudix box motif is present at residues 67–89 (GAVDSSDASLIAAALREAQEEVA). Mg(2+) contacts are provided by glutamate 83 and glutamate 87.

It belongs to the Nudix hydrolase family. PCD1 subfamily. It depends on Mn(2+) as a cofactor. Mg(2+) serves as cofactor.

Probably mediates the hydrolysis of some nucleoside diphosphate derivatives. This is an uncharacterized protein from Citrobacter koseri (strain ATCC BAA-895 / CDC 4225-83 / SGSC4696).